The sequence spans 176 residues: MHKKYSCLQIGIHWLVLLLVIIAWSSIELRGFAPRSYQPWMKMIHFSCGIAILVLMMTRILIQLRYPTPPIVPKPSPMIVGLAHVGHWVIYLLFIALPIIGIAILYCRGSSWIAFGLIMPHAEQANFDLADTLKAYHLLLANMSYFVIGLHALAALLHHYVLKDNTLLRMMPKKRG.

Helical transmembrane passes span Cys-7–Ile-27, Ile-44–Leu-64, Val-85–Leu-105, and His-137–Leu-157. Heme b contacts are provided by His-13 and His-45. 2 residues coordinate heme b: His-137 and His-151.

Belongs to the cytochrome b561 family. Requires heme b as cofactor.

It is found in the cell inner membrane. It catalyses the reaction a ubiquinol + 2 O2 = 2 superoxide + a ubiquinone + 2 H(+). In terms of biological role, B-type di-heme cytochrome. Catalyzes the oxidation of superoxide to molecular oxygen and transfers the extracted electrons to ubiquinone through the two hemes. The polypeptide is Probable superoxide oxidase CybB (cybB) (Yersinia pestis).